Consider the following 208-residue polypeptide: Putative ribosomal protein uS2-like (208 aa).

This sequence belongs to the universal ribosomal protein uS2 family.

The protein localises to the plastid. The protein resides in the chloroplast. The protein is Putative ribosomal protein uS2-like (rps2-2) of Chlamydomonas reinhardtii (Chlamydomonas smithii).